The following is a 360-amino-acid chain: Probable mannan endo-1,4-beta-mannosidase A (360 aa).

The signal sequence occupies residues Met-1–Ala-18. Substrate-binding residues include Asn-142 and Asn-178. Glu-179 acts as the Proton donor in catalysis. Position 254 (Tyr-254) interacts with substrate. Glu-287 serves as the catalytic Nucleophile. Asn-307 is a glycosylation site (N-linked (GlcNAc...) asparagine). Residue Trp-317 participates in substrate binding.

It belongs to the glycosyl hydrolase 5 (cellulase A) family.

The protein localises to the secreted. It catalyses the reaction Random hydrolysis of (1-&gt;4)-beta-D-mannosidic linkages in mannans, galactomannans and glucomannans.. Functionally, endo-1,4-mannanase, a crucial enzyme for depolymerization of seed galactomannans and wood galactoglucomannans. In Aspergillus clavatus (strain ATCC 1007 / CBS 513.65 / DSM 816 / NCTC 3887 / NRRL 1 / QM 1276 / 107), this protein is Probable mannan endo-1,4-beta-mannosidase A (manA).